The primary structure comprises 181 residues: Peptide deformylase (181 aa).

Fe cation is bound by residues cysteine 104 and histidine 146. Residue glutamate 147 is part of the active site. Residue histidine 150 participates in Fe cation binding.

The protein belongs to the polypeptide deformylase family. Fe(2+) is required as a cofactor.

The enzyme catalyses N-terminal N-formyl-L-methionyl-[peptide] + H2O = N-terminal L-methionyl-[peptide] + formate. Its function is as follows. Removes the formyl group from the N-terminal Met of newly synthesized proteins. Requires at least a dipeptide for an efficient rate of reaction. N-terminal L-methionine is a prerequisite for activity but the enzyme has broad specificity at other positions. This is Peptide deformylase from Helicobacter hepaticus (strain ATCC 51449 / 3B1).